Reading from the N-terminus, the 329-residue chain is Ketol-acid reductoisomerase (NADP(+)) (329 aa).

A KARI N-terminal Rossmann domain is found at 2 to 182 (TQLFYDTDAD…GGTRAGILET (181 aa)). Residues 25 to 28 (YGSQ), Ser-51, Ser-53, and 83 to 86 (DEFQ) contribute to the NADP(+) site. His-108 is an active-site residue. Gly-134 contributes to the NADP(+) binding site. In terms of domain architecture, KARI C-terminal knotted spans 183–328 (NFKEETETDL…KGLRAMFSWL (146 aa)). 4 residues coordinate Mg(2+): Asp-191, Glu-195, Glu-227, and Glu-231. Ser-252 serves as a coordination point for substrate.

Belongs to the ketol-acid reductoisomerase family. The cofactor is Mg(2+).

It catalyses the reaction (2R)-2,3-dihydroxy-3-methylbutanoate + NADP(+) = (2S)-2-acetolactate + NADPH + H(+). The enzyme catalyses (2R,3R)-2,3-dihydroxy-3-methylpentanoate + NADP(+) = (S)-2-ethyl-2-hydroxy-3-oxobutanoate + NADPH + H(+). It functions in the pathway amino-acid biosynthesis; L-isoleucine biosynthesis; L-isoleucine from 2-oxobutanoate: step 2/4. It participates in amino-acid biosynthesis; L-valine biosynthesis; L-valine from pyruvate: step 2/4. Involved in the biosynthesis of branched-chain amino acids (BCAA). Catalyzes an alkyl-migration followed by a ketol-acid reduction of (S)-2-acetolactate (S2AL) to yield (R)-2,3-dihydroxy-isovalerate. In the isomerase reaction, S2AL is rearranged via a Mg-dependent methyl migration to produce 3-hydroxy-3-methyl-2-ketobutyrate (HMKB). In the reductase reaction, this 2-ketoacid undergoes a metal-dependent reduction by NADPH to yield (R)-2,3-dihydroxy-isovalerate. In Prochlorococcus marinus subsp. pastoris (strain CCMP1986 / NIES-2087 / MED4), this protein is Ketol-acid reductoisomerase (NADP(+)).